Reading from the N-terminus, the 240-residue chain is UDP-2,3-diacylglucosamine hydrolase (240 aa).

5 residues coordinate Mn(2+): aspartate 8, histidine 10, aspartate 41, asparagine 79, and histidine 114. 79-80 (NR) is a substrate binding site. Positions 122, 160, 164, 167, and 195 each coordinate substrate. 2 residues coordinate Mn(2+): histidine 195 and histidine 197.

It belongs to the LpxH family. Mn(2+) is required as a cofactor.

It is found in the cell inner membrane. It carries out the reaction UDP-2-N,3-O-bis[(3R)-3-hydroxytetradecanoyl]-alpha-D-glucosamine + H2O = 2-N,3-O-bis[(3R)-3-hydroxytetradecanoyl]-alpha-D-glucosaminyl 1-phosphate + UMP + 2 H(+). It participates in glycolipid biosynthesis; lipid IV(A) biosynthesis; lipid IV(A) from (3R)-3-hydroxytetradecanoyl-[acyl-carrier-protein] and UDP-N-acetyl-alpha-D-glucosamine: step 4/6. Its function is as follows. Hydrolyzes the pyrophosphate bond of UDP-2,3-diacylglucosamine to yield 2,3-diacylglucosamine 1-phosphate (lipid X) and UMP by catalyzing the attack of water at the alpha-P atom. Involved in the biosynthesis of lipid A, a phosphorylated glycolipid that anchors the lipopolysaccharide to the outer membrane of the cell. The sequence is that of UDP-2,3-diacylglucosamine hydrolase from Escherichia coli O6:H1 (strain CFT073 / ATCC 700928 / UPEC).